Consider the following 188-residue polypeptide: MLQLQPSAVATTIQQGGVIAYPTEAVFGLGCDPDNDSAIEKLLVVKQRPWQKGLILVASSFEQLLPYLDITQLTEQQLQFAQSKWPGPFTFVMPIQSHVSKLLCGEFDSIAVRVSAHPVVRELCDTLNKPLVSTSANLAGEQPVVDAQHIITDFSDKIDALILGKLGEQRQPSTIIDARSGQILRNGS.

The YrdC-like domain maps to 3 to 188; it reads QLQPSAVATT…RSGQILRNGS (186 aa).

The protein belongs to the SUA5 family. TsaC subfamily.

Its subcellular location is the cytoplasm. It carries out the reaction L-threonine + hydrogencarbonate + ATP = L-threonylcarbamoyladenylate + diphosphate + H2O. Required for the formation of a threonylcarbamoyl group on adenosine at position 37 (t(6)A37) in tRNAs that read codons beginning with adenine. Catalyzes the conversion of L-threonine, HCO(3)(-)/CO(2) and ATP to give threonylcarbamoyl-AMP (TC-AMP) as the acyladenylate intermediate, with the release of diphosphate. This is Threonylcarbamoyl-AMP synthase from Shewanella frigidimarina (strain NCIMB 400).